Reading from the N-terminus, the 321-residue chain is MNTVGTPLLWGGFAVVVAIMLAIDLLLQGRRGAHAMTMKQAAAWSLVWVTLSLLFNAAFWWYLVQTEGRAVADPQALAFLTGYLIEKSLAVDNVFVWLMLFSYFSVPAALQRRVLVYGVLGAIVLRTIMIFTGSWLISQFDWILYIFGAFLLFTGVKMALAHEDESGIGDKPLVRWLRGHLRMTDTIDNEHFFVRKNGLLYATPLMLVLILVELSDVIFAVDSIPAIFAVTTDPFIVLTSNLFAILGLRAMYFLLAGVAERFSMLKYGLAVILVFIGIKMLIVDFYHIPIAVSLGVVFGILVMTFIINAWVNYRHDKQRGG.

Topologically, residues 1-6 are periplasmic; it reads MNTVGT. The chain crosses the membrane as a helical span at residues 7–27; that stretch reads PLLWGGFAVVVAIMLAIDLLL. The Cytoplasmic portion of the chain corresponds to 28–43; it reads QGRRGAHAMTMKQAAA. A helical membrane pass occupies residues 44 to 64; that stretch reads WSLVWVTLSLLFNAAFWWYLV. Residues 65–89 are Periplasmic-facing; that stretch reads QTEGRAVADPQALAFLTGYLIEKSL. A helical transmembrane segment spans residues 90–110; the sequence is AVDNVFVWLMLFSYFSVPAAL. The Cytoplasmic segment spans residues 111–113; sequence QRR. Residues 114–134 traverse the membrane as a helical segment; that stretch reads VLVYGVLGAIVLRTIMIFTGS. Residue Trp135 is a topological domain, periplasmic. The helical transmembrane segment at 136-156 threads the bilayer; sequence LISQFDWILYIFGAFLLFTGV. Over 157–198 the chain is Cytoplasmic; sequence KMALAHEDESGIGDKPLVRWLRGHLRMTDTIDNEHFFVRKNG. Residues 199 to 219 form a helical membrane-spanning segment; the sequence is LLYATPLMLVLILVELSDVIF. At 220 to 225 the chain is on the periplasmic side; it reads AVDSIP. Residues 226-246 form a helical membrane-spanning segment; sequence AIFAVTTDPFIVLTSNLFAIL. The Cytoplasmic portion of the chain corresponds to 247 to 261; it reads GLRAMYFLLAGVAER. Residues 262-282 form a helical membrane-spanning segment; the sequence is FSMLKYGLAVILVFIGIKMLI. The Periplasmic portion of the chain corresponds to 283 to 286; that stretch reads VDFY. Residues 287 to 307 form a helical membrane-spanning segment; it reads HIPIAVSLGVVFGILVMTFII. Topologically, residues 308-321 are cytoplasmic; sequence NAWVNYRHDKQRGG.

The protein belongs to the TerC family.

The protein localises to the cell inner membrane. In terms of biological role, has been proposed to be a redox modulator. This is Putative membrane-bound redox modulator Alx from Escherichia coli (strain K12).